The primary structure comprises 214 residues: Small ribosomal subunit protein uS3c (214 aa).

Residues 39–111 form the KH type-2 domain; sequence IRTYLNKLAK…QITINVVEVE (73 aa).

Belongs to the universal ribosomal protein uS3 family. In terms of assembly, part of the 30S ribosomal subunit.

The protein resides in the plastid. Its subcellular location is the chloroplast. The sequence is that of Small ribosomal subunit protein uS3c (rps3) from Thalassiosira pseudonana (Marine diatom).